The chain runs to 197 residues: Signal-regulatory protein delta (197 aa).

The first 29 residues, 1–29 (MPIPASPLHPPLPSLLLYLLLELAGVTHV), serve as a signal peptide directing secretion. The 105-residue stretch at 31–135 (HVQQTEMSQT…IKEYQSGRGT (105 aa)) folds into the Ig-like V-type domain. A disulfide bridge connects residues Cys51 and Cys117. Residues 139–158 (VTEQNPRPPKNRPAGRAGSR) form a disordered region. An N-linked (GlcNAc...) asparagine glycan is attached at Asn174.

It localises to the secreted. This Homo sapiens (Human) protein is Signal-regulatory protein delta (SIRPD).